A 369-amino-acid polypeptide reads, in one-letter code: MAIGYVWNTLYGWVDTGTGSLAAANLTARMQPISHHLAHPDTKRRFHELVCASGQIEHLTPIAAVAATDADILRAHSAAHLENMKRVSNLPTGGDTGDGITMMGNGGLEIARLSAGGAVELTRRVATGELSAGYALVNPPGHHAPHNAAMGFCIFNNTSVAAGYARAVLGMERVAILDWDVHHGNGTQDIWWNDPSVLTISLHQHLCFPPDSGYSTERGAGNGHGYNINVPLPPGSGNAAYLHAMDQVVLHALRAYRPQLIIVGSGFDASMLDPLARMMVTADGFRQMARRTIDCAADICDGRIVFVQEGGYSPHYLPFCGLAVIEELTGVRSLPDPYHEFLAGMGGNTLLDAERAAIEEIVPLLADIR.

Residue histidine 143 is the Proton donor/acceptor of the active site. Aspartate 180, histidine 182, and aspartate 268 together coordinate Zn(2+).

Belongs to the histone deacetylase family. As to quaternary structure, homotetramer; dimer of dimers. Requires Zn(2+) as cofactor.

Its activity is regulated as follows. Zinc, and cobalt and nickel at a lesser extent, are able to increase the catalytic activity (2.2-, 1.3- and 1.1-fold respectively) at concentrations of 1 mM. Higher concentrations have an inhibitory effect. Magnesium, manganese and calcium have no effect on activity at concentrations between 0 and 10 mM. At 100 mM, the catalytic activity is increased between 1.2- and 2.1-fold. Hydroxamates like TSA and SAHA inhibit the enzyme. Is also inhibited by azobenzenes, stilbenes and arylazopyrazoles. Exhibits significant levels of protein deacetylase activity comparable to those of eukaryotic HDACs in assays both with fluorogenic peptidic substrates and acetate-radiolabeled histones. Accepts proteins with epsilon-acetylated lysine residues and tritiated-acetate-prelabeled chicken histones as substrates. The natural substrate protein is not yet known. The protein is Histone deacetylase-like amidohydrolase (hdaH) of Alcaligenes sp. (strain DSM 11172) (Bordetella sp. (strain FB188)).